A 439-amino-acid polypeptide reads, in one-letter code: 26S proteasome regulatory subunit 6A (439 aa).

Met1 bears the N-acetylmethionine mark. Residue Ser9 is modified to Phosphoserine. 227-234 (GPPGTGKT) contributes to the ATP binding site. The residue at position 376 (Ser376) is a Phosphoserine.

The protein belongs to the AAA ATPase family. Component of the 19S proteasome regulatory particle complex. The 26S proteasome consists of a 20S core particle (CP) and two 19S regulatory subunits (RP). The regulatory particle is made of a lid composed of 9 subunits, a base containing 6 ATPases including PSMC3 and few additional components. Interacts with PAAF1.

It is found in the cytoplasm. Its subcellular location is the nucleus. In terms of biological role, component of the 26S proteasome, a multiprotein complex involved in the ATP-dependent degradation of ubiquitinated proteins. This complex plays a key role in the maintenance of protein homeostasis by removing misfolded or damaged proteins, which could impair cellular functions, and by removing proteins whose functions are no longer required. Therefore, the proteasome participates in numerous cellular processes, including cell cycle progression, apoptosis, or DNA damage repair. PSMC3 belongs to the heterohexameric ring of AAA (ATPases associated with diverse cellular activities) proteins that unfolds ubiquitinated target proteins that are concurrently translocated into a proteolytic chamber and degraded into peptides. This chain is 26S proteasome regulatory subunit 6A (Psmc3), found in Rattus norvegicus (Rat).